Here is a 321-residue protein sequence, read N- to C-terminus: MSGAKSAQGPEEGGVCITEALITKRNLTFPEDEELSEKMFHTLDELQTVRLDREGITTIRNLEGLKNLHSLYLQGNKIQQIENLACVPSLRFLSLAGNQIRQVENLLDLPCLQFLDLSENLIETLKLDEFPQSLLILNLSGNSCTNQDSYRELVIEALPLLLDLDGQPVMERWISDEEDEASSEEEFPELSGPFCSERGFLKELEQELSRHREHRQQAALTQHLLRMEMQPTLTNLPLLPGVPMAGDSSPSTTPGQGEETVPEAVSSPQASSPTKKPCSLIPRGRQNSLWGRKGVRASTVPKASVAEAPSTTKTMAKRSKK.

LRR repeat units lie at residues 45-66 (ELQT…EGLK), 67-88 (NLHS…ACVP), 89-110 (SLRF…LDLP), and 111-132 (CLQF…EFPQ). The LRRCT domain maps to 142-184 (NSCTNQDSYRELVIEALPLLLDLDGQPVMERWISDEEDEASSE). A phosphoserine mark is found at serine 175 and serine 182. A coiled-coil region spans residues 198 to 222 (RGFLKELEQELSRHREHRQQAALTQ). Residues 235–321 (NLPLLPGVPM…TKTMAKRSKK (87 aa)) are disordered.

Its subcellular location is the cell projection. The protein resides in the cilium. It localises to the flagellum. Functionally, required for normal spermatogenesis and male fertility. Plays an important role in sperm flagellum biogenesis. This is Leucine-rich repeat-containing protein 46 (LRRC46) from Macaca fascicularis (Crab-eating macaque).